Reading from the N-terminus, the 409-residue chain is MIKRYTCQNGVRIVLENNPTVRSVAIGVWIGTGSRHETPEINGISHFLEHMFFKGTSTKSAREIAESFDRIGGQVNAFTSKEYTCYYAKVLDEHANYALDVLADMFFHSTFDENELKKEKNVVYEEIKMYEDAPDDIVHDLLSKATYGNHSLGYPILGTEETLASFNGDSLRQYMHDYYTPDRVVISVAGNISDSFIKDVEKWFGSYEAKGKATGLEKPEFHTEKLTRKKETEQAHLCLGFKGLEVGHERIYDLIVLNNVLGGSMSSRLFQDVREDKGLAYSVYSYHSSYEDSGMLTIYGGTGANQLQQLSETIQETLATLKRDGITSKELENSKEQMKGSLMLSLESTNSKMSRNGKNELLLGKHKTLDEIINELNAVNLERVNGLARQLFTEDYALALISPSGNMPS.

Histidine 46 is a binding site for Zn(2+). Catalysis depends on glutamate 49, which acts as the Proton acceptor. Positions 50 and 126 each coordinate Zn(2+).

The protein belongs to the peptidase M16 family. The cofactor is Zn(2+).

This is an uncharacterized protein from Bacillus subtilis (strain 168).